Consider the following 321-residue polypeptide: Endoglucanase 1 (321 aa).

Residues 1–27 (MSRKLRTLMAALCALPLAFAAAPPAHA) form the signal peptide. D110 is an active-site residue. A disulfide bridge links C112 with C156. D149 functions as the Proton donor in the catalytic mechanism. D295 (nucleophile) is an active-site residue.

The protein belongs to the glycosyl hydrolase 6 (cellulase B) family.

The catalysed reaction is Endohydrolysis of (1-&gt;4)-beta-D-glucosidic linkages in cellulose, lichenin and cereal beta-D-glucans.. Functionally, implicated in the mechanism of induction exerted by cellobiose. In Streptomyces halstedii, this protein is Endoglucanase 1 (celA1).